Consider the following 173-residue polypeptide: Crossover junction endodeoxyribonuclease RuvC (173 aa).

Catalysis depends on residues Asp-8, Glu-69, and Asp-141. Mg(2+)-binding residues include Asp-8, Glu-69, and Asp-141.

The protein belongs to the RuvC family. As to quaternary structure, homodimer which binds Holliday junction (HJ) DNA. The HJ becomes 2-fold symmetrical on binding to RuvC with unstacked arms; it has a different conformation from HJ DNA in complex with RuvA. In the full resolvosome a probable DNA-RuvA(4)-RuvB(12)-RuvC(2) complex forms which resolves the HJ. It depends on Mg(2+) as a cofactor.

It is found in the cytoplasm. It carries out the reaction Endonucleolytic cleavage at a junction such as a reciprocal single-stranded crossover between two homologous DNA duplexes (Holliday junction).. Functionally, the RuvA-RuvB-RuvC complex processes Holliday junction (HJ) DNA during genetic recombination and DNA repair. Endonuclease that resolves HJ intermediates. Cleaves cruciform DNA by making single-stranded nicks across the HJ at symmetrical positions within the homologous arms, yielding a 5'-phosphate and a 3'-hydroxyl group; requires a central core of homology in the junction. The consensus cleavage sequence is 5'-(A/T)TT(C/G)-3'. Cleavage occurs on the 3'-side of the TT dinucleotide at the point of strand exchange. HJ branch migration catalyzed by RuvA-RuvB allows RuvC to scan DNA until it finds its consensus sequence, where it cleaves and resolves the cruciform DNA. In Xylella fastidiosa (strain 9a5c), this protein is Crossover junction endodeoxyribonuclease RuvC.